The primary structure comprises 678 residues: Ribonuclease Z 2, mitochondrial (678 aa).

A mitochondrion-targeting transit peptide spans methionine 1–arginine 37.

It belongs to the RNase Z family. Requires Zn(2+) as cofactor.

Its subcellular location is the mitochondrion. The protein localises to the cytoplasm. The catalysed reaction is Endonucleolytic cleavage of RNA, removing extra 3' nucleotides from tRNA precursor, generating 3' termini of tRNAs. A 3'-hydroxy group is left at the tRNA terminus and a 5'-phosphoryl group is left at the trailer molecule.. Zinc phosphodiesterase, which displays some tRNA 3'-processing endonuclease activity. May be involved in tRNA maturation, by removing a 3'-trailer from precursor tRNA. The protein is Ribonuclease Z 2, mitochondrial (trz2) of Schizosaccharomyces pombe (strain 972 / ATCC 24843) (Fission yeast).